A 621-amino-acid polypeptide reads, in one-letter code: GFPVRVIIPGCIGGRMVKWLKRIIVTPAESDNYYHFKDNRVLPSHVDAELANAEAWWYKPEYIINELNINSVITTPCHDEILPINAFTTQRPYTLKGYAYSGGGKKVTRVEVTLDGGETWLVCTDHPEKPTKYGKYWCWCFWSLEVEVLDLLSAKEIAVRAWDESLNTQPEKLIWNVMGMMNNCWFRVKTNVCKPHKGEIGIVFDHPTLPGNESGGWMAKEKHLETAEAAAPGLKRSTSTPFMNTTDVGKEFTMSEVRKHASQESAWIVVHGHVYDCTKFLKDHPGGADSILINAGTDCTEEFDAIHSDKAKALLDTYRIGELITTGTGYSSDNSVHGGSVLSHLAPIRRAVRAPALSNPREKIHCRLVGKKELSRDVRLFRFSLPSPDQVLGLPIGKHIFVCASIEGKLCMRAYTPTSMVDEIGHFDLLVKVYFKNEHPKFPNGGLMTQYLDSLPVGSYIDVKGPLGHVEYTGRGSFVINGKQRHASRLAMICGGSGITPMYQIIQAVLRDQPEDHTEMHLVYANRTEDDILLRDELDRWAAEYPDRLKVWYVIDQVKRPEEGWKYSVGFVTEAVLREHVPEGGDDTLALACGPPPMIQFAISPNLEKMKYDMANSFVVF.

Residues 249-324 (GKEFTMSEVR…LDTYRIGELI (76 aa)) enclose the Cytochrome b5 heme-binding domain. Residues H284 and H307 each coordinate heme. Positions 361–473 (REKIHCRLVG…KGPLGHVEYT (113 aa)) constitute an FAD-binding FR-type domain. Residues 413 to 416 (RAYT), 430 to 432 (LVK), F435, 447 to 449 (LMT), S497, and T500 contribute to the FAD site.

This sequence belongs to the nitrate reductase family. In terms of assembly, homodimer. FAD is required as a cofactor. The cofactor is heme. Mo-molybdopterin serves as cofactor.

It carries out the reaction nitrite + NAD(+) + H2O = nitrate + NADH + H(+). Nitrate reductase is a key enzyme involved in the first step of nitrate assimilation in plants, fungi and bacteria. This is Nitrate reductase [NADH] 1 from Zea mays (Maize).